The chain runs to 373 residues: tRNA-specific 2-thiouridylase MnmA (373 aa).

ATP-binding positions include 12 to 19 and Met38; that span reads GMSGGVDS. The interval 98–100 is interaction with target base in tRNA; that stretch reads NPD. The Nucleophile role is filled by Cys103. An intrachain disulfide couples Cys103 to Cys200. Gly127 contributes to the ATP binding site. Residues 150-152 form an interaction with tRNA region; sequence KDQ. Cys200 acts as the Cysteine persulfide intermediate in catalysis. The tract at residues 312–313 is interaction with tRNA; it reads RY.

It belongs to the MnmA/TRMU family.

Its subcellular location is the cytoplasm. It catalyses the reaction S-sulfanyl-L-cysteinyl-[protein] + uridine(34) in tRNA + AH2 + ATP = 2-thiouridine(34) in tRNA + L-cysteinyl-[protein] + A + AMP + diphosphate + H(+). Its function is as follows. Catalyzes the 2-thiolation of uridine at the wobble position (U34) of tRNA, leading to the formation of s(2)U34. This chain is tRNA-specific 2-thiouridylase MnmA, found in Streptococcus pyogenes serotype M1.